The sequence spans 583 residues: Arginine--tRNA ligase (583 aa).

The 'HIGH' region signature appears at Ala121 to His131.

Belongs to the class-I aminoacyl-tRNA synthetase family. As to quaternary structure, monomer.

The protein resides in the cytoplasm. It carries out the reaction tRNA(Arg) + L-arginine + ATP = L-arginyl-tRNA(Arg) + AMP + diphosphate. In Aquifex aeolicus (strain VF5), this protein is Arginine--tRNA ligase (argS).